The sequence spans 134 residues: Putative pre-16S rRNA nuclease (134 aa).

This sequence belongs to the YqgF nuclease family.

Its subcellular location is the cytoplasm. Could be a nuclease involved in processing of the 5'-end of pre-16S rRNA. This Helicobacter pylori (strain ATCC 700392 / 26695) (Campylobacter pylori) protein is Putative pre-16S rRNA nuclease.